Here is a 1648-residue protein sequence, read N- to C-terminus: eIF-2-alpha kinase GCN2 (1648 aa).

Residues 1–26 (MAGGRGASGRGRAEPQESYSQRQDHE) are disordered. An RWD domain is found at 25 to 137 (HELQALEAIY…HHVQSFLSEH (113 aa)). Residues 146–205 (HEEMLERQAQEKQQRLLEARRKEEQEQREILHEIQRRKEEIKEEKKRKEMAKQERLEITS) are a coiled coil. Phosphoserine is present on S230. Protein kinase domains are found at residues 286–538 (VGSD…HSFI) and 589–1000 (FEEL…SELL). Residues 595–603 (LGKGAFGAV) and K618 contribute to the ATP site. Residues 661–784 (PAVPGTPPPD…CNQKDGSHEI (124 aa)) form a disordered region. T666 is subject to Phosphothreonine. 2 stretches are compositionally biased toward polar residues: residues 673-686 (PQAQ…GKTS) and 704-722 (LSSS…STRF). Acidic residues-rich tracts occupy residues 730 to 739 (SSDEEDEDER) and 753 to 763 (SDSDIIFDNED). The segment covering 775–784 (CNQKDGSHEI) has biased composition (basic and acidic residues). D846 (proton acceptor) is an active-site residue. T869 carries the post-translational modification Phosphothreonine. Residues T898 and T903 each carry the phosphothreonine; by autocatalysis modification. Positions 1021 to 1492 (IDGKAYRTMM…DHVMQKLRTK (472 aa)) are histidyl-tRNA synthetase-like. K1258 is modified (N6-acetyllysine).

The protein belongs to the protein kinase superfamily. Ser/Thr protein kinase family. GCN2 subfamily. As to quaternary structure, homodimer; homodimerization is important for kinase activation by uncharged tRNAs. Interacts with GCN1; this interaction stimulates EIF2AK4/GCN2 kinase activity and is impaired by IMPACT upon a variety of stress conditions, such as amino acid depletion, UV-C irradiation, proteasome inhibitor treatment and glucose deprivation. Interacts with DNAJC3; this interaction inhibits EIF2AK4/GCN2 kinase activity during endoplasmic reticulum (ER), hypothermic and amino acid-starving stress conditions. Interacts with MAP3K20; activates EIF2AK4/GCN2 kinase activity in response to moderate ribotoxic stress. In terms of processing, autophosphorylated; autophosphorylation on Thr-898 is increased upon amino acid starvation and in UV irradiation cells and inhibited in presence of IMPACT. Expressed in liver. Expressed predominantly in the hippocampal CA1 region and the dentate gyrus, and to a lesser degree in CA3 (at protein level). Expressed in liver, lung, brain, kidney, skeletal muscle and testis. Expressed weakly in heart and spleen. Expressed in the hippocampal CA1 and CA3 regions, the dentate gyrus and cerebellum. Isoform 1 is widely expressed. Isoform 1 is expressed in brain, liver, skeletal muscle and testis. Isoform 3 is expressed in lung, brain, testis, prostate and choroid plexus. Isoform 4 is expressed in muscle, lung, kidney, brain, testis and prostate.

Its subcellular location is the cytoplasm. It carries out the reaction L-seryl-[protein] + ATP = O-phospho-L-seryl-[protein] + ADP + H(+). The catalysed reaction is L-threonyl-[protein] + ATP = O-phospho-L-threonyl-[protein] + ADP + H(+). Its activity is regulated as follows. (Microbial infection) Kinase activity is enhanced by alphavirus genomic RNA sequences. Kinase activity is stimulated upon binding to uncharged tRNAs. Activated by serum starvation (in vitro). Functionally, metabolic-stress sensing protein kinase that phosphorylates the alpha subunit of eukaryotic translation initiation factor 2 (EIF2S1/eIF-2-alpha) in response to low amino acid availability. Plays a role as an activator of the integrated stress response (ISR) required for adaptation to amino acid starvation. EIF2S1/eIF-2-alpha phosphorylation in response to stress converts EIF2S1/eIF-2-alpha into a global protein synthesis inhibitor, leading to a global attenuation of cap-dependent translation, and thus to a reduced overall utilization of amino acids, while concomitantly initiating the preferential translation of ISR-specific mRNAs, such as the transcriptional activator ATF4, and hence allowing ATF4-mediated reprogramming of amino acid biosynthetic gene expression to alleviate nutrient depletion. Required for the translational induction of protein kinase PRKCH following amino acid starvation. Binds uncharged tRNAs. Involved in cell cycle arrest by promoting cyclin D1 mRNA translation repression after the unfolded protein response pathway (UPR) activation or cell cycle inhibitor CDKN1A/p21 mRNA translation activation in response to amino acid deprivation. Plays a role in the consolidation of synaptic plasticity, learning as well as formation of long-term memory. Plays a role in neurite outgrowth inhibition. Plays a role in feeding behavior to maintain amino acid homeostasis; contributes to the innate aversion toward diets of imbalanced amino acid composition. Plays a proapoptotic role in response to glucose deprivation. Promotes global cellular protein synthesis repression in response to UV irradiation independently of the stress-activated protein kinase/c-Jun N-terminal kinase (SAPK/JNK) and p38 MAPK signaling pathways. In terms of biological role, (Microbial infection) Plays a role in the antiviral response against alphavirus infection; impairs early viral mRNA translation of the incoming genomic virus RNA, thus preventing alphavirus replication. Its function is as follows. (Microbial infection) Plays a role in modulating the adaptive immune response to Yellow fever virus infection; promotes dendritic cells to initiate autophagy and antigene presentation to both CD4(+) and CD8(+) T-cells under amino acid starvation. This chain is eIF-2-alpha kinase GCN2, found in Mus musculus (Mouse).